The following is a 133-amino-acid chain: Small ribosomal subunit protein uS8 (133 aa).

It belongs to the universal ribosomal protein uS8 family. Part of the 30S ribosomal subunit. Contacts proteins S5 and S12.

In terms of biological role, one of the primary rRNA binding proteins, it binds directly to 16S rRNA central domain where it helps coordinate assembly of the platform of the 30S subunit. The protein is Small ribosomal subunit protein uS8 of Synechococcus sp. (strain WH7803).